A 142-amino-acid polypeptide reads, in one-letter code: Large ribosomal subunit protein uL22c (142 aa).

The protein belongs to the universal ribosomal protein uL22 family. In terms of assembly, part of the 50S ribosomal subunit.

The protein resides in the plastid. Its subcellular location is the chloroplast. Its function is as follows. This protein binds specifically to 23S rRNA. The globular domain of the protein is located near the polypeptide exit tunnel on the outside of the subunit, while an extended beta-hairpin is found that lines the wall of the exit tunnel in the center of the 70S ribosome. The chain is Large ribosomal subunit protein uL22c (rpl22) from Pinus koraiensis (Korean pine).